The chain runs to 216 residues: Probable GTP-binding protein EngB (216 aa).

In terms of domain architecture, EngB-type G spans Pro26–Glu210. GTP is bound by residues Gly34–Ser41, Gly59–Lys63, Asp76–Gly79, Asn156–Asp159, and Ile189–Ala191. Ser41 and Thr61 together coordinate Mg(2+).

It belongs to the TRAFAC class TrmE-Era-EngA-EngB-Septin-like GTPase superfamily. EngB GTPase family. Requires Mg(2+) as cofactor.

Its function is as follows. Necessary for normal cell division and for the maintenance of normal septation. This Pyrococcus horikoshii (strain ATCC 700860 / DSM 12428 / JCM 9974 / NBRC 100139 / OT-3) protein is Probable GTP-binding protein EngB.